The primary structure comprises 367 residues: UDP-N-acetylglucosamine--N-acetylmuramyl-(pentapeptide) pyrophosphoryl-undecaprenol N-acetylglucosamine transferase (367 aa).

Residues 15 to 17 (TGG), Asn127, Arg163, Ser191, Ile249, and Gln294 each bind UDP-N-acetyl-alpha-D-glucosamine.

It belongs to the glycosyltransferase 28 family. MurG subfamily.

Its subcellular location is the cell inner membrane. The enzyme catalyses di-trans,octa-cis-undecaprenyl diphospho-N-acetyl-alpha-D-muramoyl-L-alanyl-D-glutamyl-meso-2,6-diaminopimeloyl-D-alanyl-D-alanine + UDP-N-acetyl-alpha-D-glucosamine = di-trans,octa-cis-undecaprenyl diphospho-[N-acetyl-alpha-D-glucosaminyl-(1-&gt;4)]-N-acetyl-alpha-D-muramoyl-L-alanyl-D-glutamyl-meso-2,6-diaminopimeloyl-D-alanyl-D-alanine + UDP + H(+). The protein operates within cell wall biogenesis; peptidoglycan biosynthesis. Its function is as follows. Cell wall formation. Catalyzes the transfer of a GlcNAc subunit on undecaprenyl-pyrophosphoryl-MurNAc-pentapeptide (lipid intermediate I) to form undecaprenyl-pyrophosphoryl-MurNAc-(pentapeptide)GlcNAc (lipid intermediate II). The polypeptide is UDP-N-acetylglucosamine--N-acetylmuramyl-(pentapeptide) pyrophosphoryl-undecaprenol N-acetylglucosamine transferase (Burkholderia ambifaria (strain MC40-6)).